Here is a 322-residue protein sequence, read N- to C-terminus: GTP 3',8-cyclase (322 aa).

Positions 5–233 (KYGRVVDYLR…NAPASIYRLD (229 aa)) constitute a Radical SAM core domain. Arg14 serves as a coordination point for GTP. Cys21 and Cys25 together coordinate [4Fe-4S] cluster. Tyr27 is a binding site for S-adenosyl-L-methionine. Cys28 lines the [4Fe-4S] cluster pocket. GTP is bound at residue Arg64. Gly68 serves as a coordination point for S-adenosyl-L-methionine. Position 95 (Thr95) interacts with GTP. Ser119 provides a ligand contact to S-adenosyl-L-methionine. Lys155 contacts GTP. Met189 contacts S-adenosyl-L-methionine. [4Fe-4S] cluster-binding residues include Cys249 and Cys252. 254–256 (RIR) contacts GTP. Residue Cys266 participates in [4Fe-4S] cluster binding.

It belongs to the radical SAM superfamily. MoaA family. As to quaternary structure, monomer and homodimer. The cofactor is [4Fe-4S] cluster.

It catalyses the reaction GTP + AH2 + S-adenosyl-L-methionine = (8S)-3',8-cyclo-7,8-dihydroguanosine 5'-triphosphate + 5'-deoxyadenosine + L-methionine + A + H(+). It functions in the pathway cofactor biosynthesis; molybdopterin biosynthesis. In terms of biological role, catalyzes the cyclization of GTP to (8S)-3',8-cyclo-7,8-dihydroguanosine 5'-triphosphate. This Campylobacter curvus (strain 525.92) protein is GTP 3',8-cyclase.